Consider the following 147-residue polypeptide: Large ribosomal subunit protein uL13 (147 aa).

The protein belongs to the universal ribosomal protein uL13 family. In terms of assembly, part of the 50S ribosomal subunit.

Its function is as follows. This protein is one of the early assembly proteins of the 50S ribosomal subunit, although it is not seen to bind rRNA by itself. It is important during the early stages of 50S assembly. In Limosilactobacillus fermentum (strain NBRC 3956 / LMG 18251) (Lactobacillus fermentum), this protein is Large ribosomal subunit protein uL13.